A 972-amino-acid chain; its full sequence is Isoleucine--tRNA ligase (972 aa).

The 'HIGH' region motif lies at 63–73; that stretch reads PYANGNIHIGH. Glu603 lines the L-isoleucyl-5'-AMP pocket. The short motif at 644–648 is the 'KMSKS' region element; it reads KMSKS. Lys647 contributes to the ATP binding site.

Belongs to the class-I aminoacyl-tRNA synthetase family. IleS type 1 subfamily. As to quaternary structure, monomer.

It is found in the cytoplasm. The enzyme catalyses tRNA(Ile) + L-isoleucine + ATP = L-isoleucyl-tRNA(Ile) + AMP + diphosphate. Functionally, catalyzes the attachment of isoleucine to tRNA(Ile). As IleRS can inadvertently accommodate and process structurally similar amino acids such as valine, to avoid such errors it has two additional distinct tRNA(Ile)-dependent editing activities. One activity is designated as 'pretransfer' editing and involves the hydrolysis of activated Val-AMP. The other activity is designated 'posttransfer' editing and involves deacylation of mischarged Val-tRNA(Ile). The chain is Isoleucine--tRNA ligase from Brucella melitensis biotype 1 (strain ATCC 23456 / CCUG 17765 / NCTC 10094 / 16M).